Here is a 428-residue protein sequence, read N- to C-terminus: Diaminopimelate decarboxylase (428 aa).

At lysine 64 the chain carries N6-(pyridoxal phosphate)lysine. Pyridoxal 5'-phosphate-binding positions include glycine 239 and glutamate 281–arginine 284. Residues arginine 284, arginine 319, and tyrosine 323 each contribute to the substrate site. Cysteine 350 serves as the catalytic Proton donor. Glutamate 351 and tyrosine 379 together coordinate substrate. Tyrosine 379 is a binding site for pyridoxal 5'-phosphate.

The protein belongs to the Orn/Lys/Arg decarboxylase class-II family. LysA subfamily. In terms of assembly, homodimer. Pyridoxal 5'-phosphate is required as a cofactor.

It carries out the reaction meso-2,6-diaminopimelate + H(+) = L-lysine + CO2. It functions in the pathway amino-acid biosynthesis; L-lysine biosynthesis via DAP pathway; L-lysine from DL-2,6-diaminopimelate: step 1/1. Specifically catalyzes the decarboxylation of meso-diaminopimelate (meso-DAP) to L-lysine. The sequence is that of Diaminopimelate decarboxylase from Methanothermobacter thermautotrophicus (strain ATCC 29096 / DSM 1053 / JCM 10044 / NBRC 100330 / Delta H) (Methanobacterium thermoautotrophicum).